A 633-amino-acid polypeptide reads, in one-letter code: GRAM domain-containing protein 4 (633 aa).

3 disordered regions span residues M1–R46, L72–G109, and V182–G216. Residues P27–R39 show a composition bias toward basic and acidic residues. Residues S75 and S79 each carry the phosphoserine modification. Over residues S95–D104 the composition is skewed to basic and acidic residues. Residues H134–Q190 adopt a coiled-coil conformation. Residues Q190 to S205 are compositionally biased toward low complexity. 3 helical membrane-spanning segments follow: residues V295–L315, T389–Y409, and L411–F431. The GRAM domain occupies G500 to K578.

Interacts with RTN4 (isoform B).

It localises to the mitochondrion membrane. It is found in the endoplasmic reticulum membrane. Plays a role as a mediator of E2F1-induced apoptosis in the absence of p53/TP53. Inhibits TLR9 response to nucelic acids and regulates TLR9-mediated innate immune response. This Mus musculus (Mouse) protein is GRAM domain-containing protein 4.